Consider the following 138-residue polypeptide: Large ribosomal subunit protein uL16 (138 aa).

The span at 1–15 shows a compositional bias: basic residues; the sequence is MLSPKKVKYRKKQRG. The tract at residues 1–20 is disordered; sequence MLSPKKVKYRKKQRGRLSGE.

This sequence belongs to the universal ribosomal protein uL16 family. Part of the 50S ribosomal subunit.

Functionally, binds 23S rRNA and is also seen to make contacts with the A and possibly P site tRNAs. In Borrelia hermsii (strain HS1 / DAH), this protein is Large ribosomal subunit protein uL16.